The sequence spans 320 residues: Tetraacyldisaccharide 4'-kinase (320 aa).

53 to 60 (SVGGNGKT) is an ATP binding site.

It belongs to the LpxK family.

The enzyme catalyses a lipid A disaccharide + ATP = a lipid IVA + ADP + H(+). The protein operates within glycolipid biosynthesis; lipid IV(A) biosynthesis; lipid IV(A) from (3R)-3-hydroxytetradecanoyl-[acyl-carrier-protein] and UDP-N-acetyl-alpha-D-glucosamine: step 6/6. Transfers the gamma-phosphate of ATP to the 4'-position of a tetraacyldisaccharide 1-phosphate intermediate (termed DS-1-P) to form tetraacyldisaccharide 1,4'-bis-phosphate (lipid IVA). The protein is Tetraacyldisaccharide 4'-kinase of Psychromonas ingrahamii (strain DSM 17664 / CCUG 51855 / 37).